Here is a 309-residue protein sequence, read N- to C-terminus: Tagatose-6-phosphate kinase (309 aa).

This sequence belongs to the carbohydrate kinase PfkB family. LacC subfamily.

The enzyme catalyses D-tagatofuranose 6-phosphate + ATP = D-tagatofuranose 1,6-bisphosphate + ADP + H(+). Its pathway is carbohydrate metabolism; D-tagatose 6-phosphate degradation; D-glyceraldehyde 3-phosphate and glycerone phosphate from D-tagatose 6-phosphate: step 1/2. The sequence is that of Tagatose-6-phosphate kinase from Streptococcus pyogenes serotype M28 (strain MGAS6180).